Here is a 389-residue protein sequence, read N- to C-terminus: 3-oxo-Delta(4,5)-steroid 5-beta-reductase (389 aa).

NADP(+) contacts are provided by residues 35-37 (TGI), 63-64 (RR), 81-82 (DI), Thr105, and Gln143. Active-site residues include Lys147 and Tyr179. NADP(+) is bound by residues Tyr179, Ile206, and 213-215 (SMM).

The protein belongs to the short-chain dehydrogenases/reductases (SDR) family. Highly divergent. Homodimer.

It carries out the reaction 5beta-cholestan-3-one + NADP(+) = cholest-4-en-3-one + NADPH + H(+). The catalysed reaction is 4,5beta-dihydrocortisone + NADP(+) = cortisone + NADPH + H(+). Involved in cardenolide biosynthesis. Catalyzes the stereospecific conversion of progesterone to 5-beta-pregnane-3,20-dione. Can use progesterone, testosterone, 4-androstene-3,17-dione, cortisol and cortisone as substrates, but not pregnenolone, 21-OH-pregnenolone or isoprogesterone. NADPH could not be replaced by NADH. The chain is 3-oxo-Delta(4,5)-steroid 5-beta-reductase from Digitalis lanata (Grecian foxglove).